The primary structure comprises 471 residues: Glutamyl-tRNA(Gln) amidotransferase subunit A (471 aa).

Catalysis depends on charge relay system residues Lys-66 and Ser-141. Residue Ser-165 is the Acyl-ester intermediate of the active site.

This sequence belongs to the amidase family. GatA subfamily. In terms of assembly, heterotrimer of A, B and C subunits.

The catalysed reaction is L-glutamyl-tRNA(Gln) + L-glutamine + ATP + H2O = L-glutaminyl-tRNA(Gln) + L-glutamate + ADP + phosphate + H(+). Its function is as follows. Allows the formation of correctly charged Gln-tRNA(Gln) through the transamidation of misacylated Glu-tRNA(Gln) in organisms which lack glutaminyl-tRNA synthetase. The reaction takes place in the presence of glutamine and ATP through an activated gamma-phospho-Glu-tRNA(Gln). This is Glutamyl-tRNA(Gln) amidotransferase subunit A from Thermus thermophilus (strain ATCC BAA-163 / DSM 7039 / HB27).